The chain runs to 956 residues: Glutamyl aminopeptidase (956 aa).

Topologically, residues Met1 to His21 are cytoplasmic. Residues Val22–Leu42 form a helical; Signal-anchor for type II membrane protein membrane-spanning segment. Topologically, residues Thr43 to Gly956 are extracellular. Residues Ser48–Ser87 form a disordered region. The segment covering Thr49 to Gln62 has biased composition (low complexity). Residues Asn126 and Asn199 are each glycosylated (N-linked (GlcNAc...) asparagine). Residue Glu225 coordinates substrate. N-linked (GlcNAc...) asparagine glycosylation occurs at Asn326. Gly359 to Asn363 is a substrate binding site. Zn(2+) is bound at residue His395. Glu396 acts as the Proton acceptor in catalysis. Residues His399 and Glu418 each contribute to the Zn(2+) site. N-linked (GlcNAc...) asparagine glycans are attached at residues Asn556, Asn569, Asn599, Asn643, Asn647, Asn679, Asn764, Asn797, Asn802, and Asn829. Substrate is bound at residue Arg888.

The protein belongs to the peptidase M1 family. Homodimer; disulfide-linked. Zn(2+) is required as a cofactor.

Its subcellular location is the cell membrane. It catalyses the reaction Release of N-terminal glutamate (and to a lesser extent aspartate) from a peptide.. With respect to regulation, substrate specificity is modulated by calcium which enhances the enzymatic activity for cleavage of acidic residues while reducing its activity with basic residues. Inhibited by aminopeptidase inhibitors amastatin and bestatin. Its function is as follows. Regulates central hypertension through its calcium-modulated preference to cleave N-terminal acidic residues from peptides such as angiotensin II. The protein is Glutamyl aminopeptidase (ENPEP) of Bos taurus (Bovine).